We begin with the raw amino-acid sequence, 450 residues long: UDP-N-acetylmuramoylalanine--D-glutamate ligase (450 aa).

119 to 125 (GSNGKTT) provides a ligand contact to ATP.

This sequence belongs to the MurCDEF family.

The protein resides in the cytoplasm. The catalysed reaction is UDP-N-acetyl-alpha-D-muramoyl-L-alanine + D-glutamate + ATP = UDP-N-acetyl-alpha-D-muramoyl-L-alanyl-D-glutamate + ADP + phosphate + H(+). It participates in cell wall biogenesis; peptidoglycan biosynthesis. Cell wall formation. Catalyzes the addition of glutamate to the nucleotide precursor UDP-N-acetylmuramoyl-L-alanine (UMA). The polypeptide is UDP-N-acetylmuramoylalanine--D-glutamate ligase (Bacillus cereus (strain B4264)).